The primary structure comprises 476 residues: Adenosylhomocysteinase (476 aa).

Substrate contacts are provided by T65, D140, and E201. 202-204 serves as a coordination point for NAD(+); that stretch reads TTT. 2 residues coordinate substrate: K231 and D235. Residues N236, 265 to 270, E288, N323, 344 to 346, and N392 each bind NAD(+); these read GYGDVG and IGH.

The protein belongs to the adenosylhomocysteinase family. The cofactor is NAD(+).

It is found in the cytoplasm. It catalyses the reaction S-adenosyl-L-homocysteine + H2O = L-homocysteine + adenosine. The protein operates within amino-acid biosynthesis; L-homocysteine biosynthesis; L-homocysteine from S-adenosyl-L-homocysteine: step 1/1. Functionally, may play a key role in the regulation of the intracellular concentration of adenosylhomocysteine. The protein is Adenosylhomocysteinase of Bacteroides thetaiotaomicron (strain ATCC 29148 / DSM 2079 / JCM 5827 / CCUG 10774 / NCTC 10582 / VPI-5482 / E50).